A 303-amino-acid polypeptide reads, in one-letter code: MTHHSLKHISDRIKQALNQIENRNLAQDLWYILGEQNFQGFLPAFTVNHFCEKYHMTDKELALILLPVSACYANPTISHFSVGAIAKGESGNFYFGANQEFCTTNIQQTVHAEQSAISHAWMRRESKITEITVNYTPCGHCRQFMNELNSAETLRIHLPHSQDNLLHHYLPDAFGPHNLQIDNRLFDKKAHNLFLITEDPLIQAALDAANQSHAPYSKTYSGIALQLQDQQIFQGSYAENAAFNPSLPPLQTALNYLLLNGNEVENIARAVLVEQPFRLSYRGMTEELLAYLGDIPLDYIQVS.

CMP/dCMP-type deaminase domains follow at residues 57-172 (TDKE…YLPD) and 196-303 (ITED…IQVS). 98–100 (NQE) is a binding site for substrate. Zn(2+) is bound at residue His-111. Residue Glu-113 is the Proton donor of the active site. Cys-138 and Cys-141 together coordinate Zn(2+).

It belongs to the cytidine and deoxycytidylate deaminase family. In terms of assembly, homodimer. It depends on Zn(2+) as a cofactor.

The catalysed reaction is cytidine + H2O + H(+) = uridine + NH4(+). It carries out the reaction 2'-deoxycytidine + H2O + H(+) = 2'-deoxyuridine + NH4(+). In terms of biological role, this enzyme scavenges exogenous and endogenous cytidine and 2'-deoxycytidine for UMP synthesis. The sequence is that of Cytidine deaminase from Histophilus somni (strain 2336) (Haemophilus somnus).